Here is a 284-residue protein sequence, read N- to C-terminus: Pantothenate synthetase (284 aa).

30 to 37 is a binding site for ATP; the sequence is MGNLHDGH. His37 acts as the Proton donor in catalysis. (R)-pantoate is bound at residue Gln61. Gln61 is a beta-alanine binding site. Residue 149 to 152 participates in ATP binding; it reads GEKD. Gln155 contributes to the (R)-pantoate binding site. ATP contacts are provided by residues Ile178 and 186–189; that span reads LSSR.

This sequence belongs to the pantothenate synthetase family. In terms of assembly, homodimer.

The protein resides in the cytoplasm. It carries out the reaction (R)-pantoate + beta-alanine + ATP = (R)-pantothenate + AMP + diphosphate + H(+). Its pathway is cofactor biosynthesis; (R)-pantothenate biosynthesis; (R)-pantothenate from (R)-pantoate and beta-alanine: step 1/1. Functionally, catalyzes the condensation of pantoate with beta-alanine in an ATP-dependent reaction via a pantoyl-adenylate intermediate. In Salmonella paratyphi B (strain ATCC BAA-1250 / SPB7), this protein is Pantothenate synthetase.